We begin with the raw amino-acid sequence, 127 residues long: Probable tautomerase YusQ (127 aa).

The Proton acceptor; via imino nitrogen role is filled by Pro-2.

It belongs to the 4-oxalocrotonate tautomerase family.

The sequence is that of Probable tautomerase YusQ (yusQ) from Bacillus subtilis (strain 168).